A 214-amino-acid chain; its full sequence is Large ribosomal subunit protein uL4 (214 aa).

The disordered stretch occupies residues 43–83; it reads RRQAGTHKAKSRSEVNRTTKKSIKQKGSGGARHGSRNAPIF.

The protein belongs to the universal ribosomal protein uL4 family. As to quaternary structure, part of the 50S ribosomal subunit.

Functionally, one of the primary rRNA binding proteins, this protein initially binds near the 5'-end of the 23S rRNA. It is important during the early stages of 50S assembly. It makes multiple contacts with different domains of the 23S rRNA in the assembled 50S subunit and ribosome. Its function is as follows. Forms part of the polypeptide exit tunnel. This is Large ribosomal subunit protein uL4 from Hyphomonas neptunium (strain ATCC 15444).